A 103-amino-acid chain; its full sequence is Large ribosomal subunit protein eL21 (103 aa).

The protein belongs to the eukaryotic ribosomal protein eL21 family.

The protein is Large ribosomal subunit protein eL21 of Sulfolobus acidocaldarius (strain ATCC 33909 / DSM 639 / JCM 8929 / NBRC 15157 / NCIMB 11770).